Here is a 96-residue protein sequence, read N- to C-terminus: Large ribosomal subunit protein uL23 (96 aa).

Belongs to the universal ribosomal protein uL23 family. In terms of assembly, part of the 50S ribosomal subunit. Contacts protein L29, and trigger factor when it is bound to the ribosome.

Its function is as follows. One of the early assembly proteins it binds 23S rRNA. One of the proteins that surrounds the polypeptide exit tunnel on the outside of the ribosome. Forms the main docking site for trigger factor binding to the ribosome. This Enterococcus faecalis (strain ATCC 700802 / V583) protein is Large ribosomal subunit protein uL23.